The following is a 155-amino-acid chain: Microsomal glutathione S-transferase 1 (155 aa).

Residues 3–9 are Lumenal-facing; that stretch reads NLSQLME. The helical transmembrane segment at 10 to 33 threads the bilayer; that stretch reads NEVFMAFASYTTIVLSKMNFMSTA. Residues 34–62 lie on the Cytoplasmic side of the membrane; the sequence is TAFYRLTKKVFANPEDCAGFGKGENAKKY. Position 38 (Arg-38) interacts with glutathione. Lys-42, Lys-55, and Lys-60 each carry N6-acetyllysine. The chain crosses the membrane as a helical span at residues 63-96; that stretch reads LRTDDRVERVRRAHLNDLENIVPFLGIGLLYSLS. Glutathione-binding residues include Arg-73, Arg-74, His-76, and Glu-81. Residues 97 to 99 are Lumenal-facing; sequence GPD. Residues 100–123 form a helical membrane-spanning segment; that stretch reads LSTAILHFRLFVRARIYHTIAYLT. Tyr-121 serves as a coordination point for glutathione. Residues 124-128 are Cytoplasmic-facing; that stretch reads PLPQP. A helical membrane pass occupies residues 129-148; it reads NRALAFFIGYGVTLSMAYRL. At 149–155 the chain is on the lumenal side; sequence LKSKLYL.

It belongs to the MAPEG family. As to quaternary structure, homotrimer; The trimer binds only one molecule of glutathione.

The protein localises to the endoplasmic reticulum membrane. The protein resides in the mitochondrion outer membrane. The enzyme catalyses RX + glutathione = an S-substituted glutathione + a halide anion + H(+). Conjugation of reduced glutathione to a wide number of exogenous and endogenous hydrophobic electrophiles. The polypeptide is Microsomal glutathione S-transferase 1 (MGST1) (Bos taurus (Bovine)).